The chain runs to 168 residues: DAZ-associated protein 2 (168 aa).

Residues 1 to 13 (MNSKGQYPTQPTY) are compositionally biased toward low complexity. A disordered region spans residues 1–25 (MNSKGQYPTQPTYPVQPPGNPVYPQ). Residues 39–42 (PPAY) carry the PPAY motif. Serine 77 is subject to Phosphoserine.

Interacts with SOX6. Interacts with DAZ1 and DAZL. Interacts with IL17RB. May interact with FAM168B. Interacts with INCA1. Interacts with EIF4G1 and EIF4G2. Interacts (via PPAY motif) with NEDD4 (via WW domains). Interacts with transcription factor TCF4; the interaction results in localization of DAZAP2 to the nucleus. Interacts with transcription factors TCF7 and TCF7L1. Interacts with transcription factor LEF1. Interacts with serine/threonine-protein kinase HIPK2; the interaction results in phosphorylation of DAZAP2 which causes localization of DAZAP2 to the nucleus, reduces interaction of DAZAP2 with HIPK2 and prevents DAZAP2-dependent degradation of HIPK2. Interacts with ubiquitin ligase SIAH1; the interaction is decreased following phosphorylation of DAZAP2 by HIPK2. Interacts with TP53; the interaction is triggered by DNA damage. Post-translationally, ubiquitinated by SMURF2, leading to proteasomal degradation. Ubiquitinated by NEDD4, leading to proteasomal degradation. Following DNA damage, phosphorylated by HIPK2 which promotes DAZAP2 localization to the nucleus, reduces interaction of DAZAP2 with HIPK2 and SIAH1, and prevents DAZAP2-dependent ubiquitination of HIPK2 by E3 ubiquitin-protein ligase SIAH1 and subsequent HIPK2 proteasomal degradation.

The protein resides in the cytoplasm. Its subcellular location is the nucleus. It is found in the nucleus speckle. It localises to the nuclear body. The protein localises to the stress granule. In unstressed cells, promotes SIAH1-mediated polyubiquitination and degradation of the serine/threonine-protein kinase HIPK2, probably by acting as a loading factor that potentiates complex formation between HIPK2 and ubiquitin ligase SIAH1. In response to DNA damage, localizes to the nucleus following phosphorylation by HIPK2 and modulates the expression of a subset of TP53/p53 target genes by binding to TP53 at target gene promoters. This limits the expression of a number of cell death-mediating TP53 target genes, reducing DNA damage-induced cell death. Enhances the binding of transcription factor TCF7L2/TCF4, a Wnt signaling pathway effector, to the promoters of target genes. Plays a role in stress granule formation. The sequence is that of DAZ-associated protein 2 from Macaca fascicularis (Crab-eating macaque).